Reading from the N-terminus, the 432-residue chain is Phosphomethylpyrimidine synthase (432 aa).

Residues Asn-66, Met-95, Tyr-124, His-163, Ser-185–Gly-187, Asp-226–Arg-229, and Glu-265 contribute to the substrate site. Residue His-269 participates in Zn(2+) binding. Residue Tyr-292 participates in substrate binding. His-333 contributes to the Zn(2+) binding site. [4Fe-4S] cluster-binding residues include Cys-409, Cys-412, and Cys-416.

The protein belongs to the ThiC family. [4Fe-4S] cluster serves as cofactor.

It carries out the reaction 5-amino-1-(5-phospho-beta-D-ribosyl)imidazole + S-adenosyl-L-methionine = 4-amino-2-methyl-5-(phosphooxymethyl)pyrimidine + CO + 5'-deoxyadenosine + formate + L-methionine + 3 H(+). The protein operates within cofactor biosynthesis; thiamine diphosphate biosynthesis. Catalyzes the synthesis of the hydroxymethylpyrimidine phosphate (HMP-P) moiety of thiamine from aminoimidazole ribotide (AIR) in a radical S-adenosyl-L-methionine (SAM)-dependent reaction. This is Phosphomethylpyrimidine synthase from Thermoanaerobacter sp. (strain X514).